The following is a 207-amino-acid chain: MNFKEKLKLYIITDRRLKPEIASVKQALEGGATSIQLRIKNAPTREMYEIGKEIRKLTNEYGALFFVDDRIDVALAVNADGVQLGPDDMPIEIAREIAPNLIIGASVYSLEEALEAEMKGADYLGAGSVFPTQTKKDVKVIGIEGLREIVNAVKIPVVAIGGINLENVREVLLTGVDGIAVVSAVMGTEDVKRATEGLRRIIEEVLG.

Residues 36–40 (QLRIK) and Asp68 each bind 4-amino-2-methyl-5-(diphosphooxymethyl)pyrimidine. Mg(2+) is bound by residues Asp69 and Asp88. Ser106 lines the 4-amino-2-methyl-5-(diphosphooxymethyl)pyrimidine pocket. A 2-[(2R,5Z)-2-carboxy-4-methylthiazol-5(2H)-ylidene]ethyl phosphate-binding site is contributed by 132-134 (TQT). Residue Lys135 participates in 4-amino-2-methyl-5-(diphosphooxymethyl)pyrimidine binding. Residues Gly162 and 182-183 (VS) contribute to the 2-[(2R,5Z)-2-carboxy-4-methylthiazol-5(2H)-ylidene]ethyl phosphate site.

This sequence belongs to the thiamine-phosphate synthase family. Requires Mg(2+) as cofactor.

It catalyses the reaction 2-[(2R,5Z)-2-carboxy-4-methylthiazol-5(2H)-ylidene]ethyl phosphate + 4-amino-2-methyl-5-(diphosphooxymethyl)pyrimidine + 2 H(+) = thiamine phosphate + CO2 + diphosphate. The enzyme catalyses 2-(2-carboxy-4-methylthiazol-5-yl)ethyl phosphate + 4-amino-2-methyl-5-(diphosphooxymethyl)pyrimidine + 2 H(+) = thiamine phosphate + CO2 + diphosphate. The catalysed reaction is 4-methyl-5-(2-phosphooxyethyl)-thiazole + 4-amino-2-methyl-5-(diphosphooxymethyl)pyrimidine + H(+) = thiamine phosphate + diphosphate. It participates in cofactor biosynthesis; thiamine diphosphate biosynthesis; thiamine phosphate from 4-amino-2-methyl-5-diphosphomethylpyrimidine and 4-methyl-5-(2-phosphoethyl)-thiazole: step 1/1. Condenses 4-methyl-5-(beta-hydroxyethyl)thiazole monophosphate (THZ-P) and 2-methyl-4-amino-5-hydroxymethyl pyrimidine pyrophosphate (HMP-PP) to form thiamine monophosphate (TMP). This is Thiamine-phosphate synthase from Pyrococcus horikoshii (strain ATCC 700860 / DSM 12428 / JCM 9974 / NBRC 100139 / OT-3).